Here is a 1996-residue protein sequence, read N- to C-terminus: Protein Shroom3 (1996 aa).

One can recognise a PDZ domain in the interval 25-110 (YIYLEAFLEG…TLRLVVRRDV (86 aa)). The segment at 150 to 173 (KHRRSEPAGRPHSWHTTKSGEKQP) is disordered. S213 carries the post-translational modification Phosphoserine. Disordered regions lie at residues 340-389 (NGQG…PARS), 437-468 (EKSPENSPPVKPKHNYTQKAQPGQPLLPTSIY), 568-629 (DASL…WEGD), 673-772 (RRHS…LQGF), and 788-1053 (FEQR…PESS). Phosphoserine is present on residues S439 and S443. The span at 700–718 (KAEDPGRKAAPDLGSHLDR) shows a compositional bias: basic and acidic residues. The segment covering 750 to 768 (HPHTSSLGRRGPGPGSASA) has biased composition (low complexity). Positions 814 to 823 (TVSTSSTSGN) are enriched in polar residues. Phosphoserine is present on S816. Composition is skewed to basic and acidic residues over residues 826–836 (EETKAHIRFSE) and 846–859 (QHFKNGELKLEEAS). Polar residues-rich tracts occupy residues 862–871 (PCGQQLSGGA) and 887–896 (RSQSTFQLSS). At S890 the chain carries Phosphoserine. The segment covering 897–909 (EPEREPEWRDRPG) has biased composition (basic and acidic residues). Residues S910 and S913 each carry the phosphoserine modification. An ASD1 domain is found at 928-1030 (IKDAQSRVLG…SEPEKMNEVG (103 aa)). A compositionally biased stretch (low complexity) spans 950–964 (APVASRSWRPRPSSA). At S970 the chain carries Phosphoserine. Over residues 1011–1027 (LTPEQKKRSYSEPEKMN) the composition is skewed to basic and acidic residues. Residues S1069 and S1072 each carry the phosphoserine modification. Disordered regions lie at residues 1093–1115 (KTGKRPTSAAGCSLQEPGPLRER), 1137–1223 (SSLS…MSAE), 1315–1573 (ECPG…SFNK), and 1627–1665 (SLGGQPAPIQTQSLSHDPVSGTQGLEKKVSPDPQKSSED). The segment covering 1137–1148 (SSLSSLREPSLQ) has biased composition (low complexity). Position 1221 is a phosphoserine (S1221). Over residues 1366–1375 (YCSQDGQTGR) the composition is skewed to polar residues. The segment covering 1403 to 1417 (CEGDGPEHGVEEGTR) has biased composition (basic and acidic residues). S1441 bears the Phosphoserine mark. A compositionally biased stretch (polar residues) spans 1459 to 1472 (KQQSLPSLCSTSDP). Residues 1498-1515 (PPPHEDYEDEVFVRDPHP) show a composition bias toward basic and acidic residues. Positions 1524-1536 (EPLPPPPPPPPSQ) are enriched in pro residues. Residues 1634-1649 (PIQTQSLSHDPVSGTQ) are compositionally biased toward polar residues. Residues 1651–1665 (LEKKVSPDPQKSSED) are compositionally biased toward basic and acidic residues. Residues 1669–1957 (EALAKEIVHQ…QVKCLLESLP (289 aa)) enclose the ASD2 domain.

Belongs to the shroom family. As to quaternary structure, interacts with F-actin. Interacts with ROCK1.

Its subcellular location is the cell junction. It localises to the adherens junction. It is found in the cytoplasm. The protein localises to the cytoskeleton. The protein resides in the apical cell membrane. Functionally, controls cell shape changes in the neuroepithelium during neural tube closure. Induces apical constriction in epithelial cells by promoting the apical accumulation of F-actin and myosin II, and probably by bundling stress fibers. Induces apicobasal cell elongation by redistributing gamma-tubulin and directing the assembly of robust apicobasal microtubule arrays. The protein is Protein Shroom3 (SHROOM3) of Homo sapiens (Human).